The primary structure comprises 149 residues: uncharacterized protein (149 aa).

This is an uncharacterized protein from Acanthamoeba polyphaga mimivirus (APMV).